Reading from the N-terminus, the 449-residue chain is Tubulin beta-8 chain (449 aa).

GTP-binding residues include Gln11, Glu69, Ser138, Gly142, Thr143, Gly144, Asn204, and Asn226. Glu69 is a binding site for Mg(2+). The tract at residues 428-449 (ATADEEEGYEYEEDEVEVQEEQ) is disordered. The segment covering 429-449 (TADEEEGYEYEEDEVEVQEEQ) has biased composition (acidic residues).

The protein belongs to the tubulin family. In terms of assembly, dimer of alpha and beta chains. A typical microtubule is a hollow water-filled tube with an outer diameter of 25 nm and an inner diameter of 15 nM. Alpha-beta heterodimers associate head-to-tail to form protofilaments running lengthwise along the microtubule wall with the beta-tubulin subunit facing the microtubule plus end conferring a structural polarity. Microtubules usually have 13 protofilaments but different protofilament numbers can be found in some organisms and specialized cells. Mg(2+) is required as a cofactor.

The protein localises to the cytoplasm. The protein resides in the cytoskeleton. Tubulin is the major constituent of microtubules, a cylinder consisting of laterally associated linear protofilaments composed of alpha- and beta-tubulin heterodimers. Microtubules grow by the addition of GTP-tubulin dimers to the microtubule end, where a stabilizing cap forms. Below the cap, tubulin dimers are in GDP-bound state, owing to GTPase activity of alpha-tubulin. The protein is Tubulin beta-8 chain (TUBB8) of Arabidopsis thaliana (Mouse-ear cress).